The sequence spans 265 residues: SPQPLEQIKLSESQLSGRVGMIEMDLASGRTLTAWRADERFPMMSTFKVVLCGAVLARVDAGDEQLERKIHYRQQDLVDYSPVSEKHLADGMTVGELCAAAITMSDNSAANLLLATVGGPAGLTAFLRQIGDNVTRLDRWETELNEALPGDARDTTTPASMAATLRKLLTSQRLSARSQLQLLQWMVDDRVAGPLIRSVLPAGWFIADKTGASKRGARGIVALLGPNNKAERIVVIYLRDTPASMAERNQQIAGIGAALIEHWQR.

Catalysis depends on S45, which acts as the Acyl-ester intermediate. The cysteines at positions 52 and 98 are disulfide-linked. Residue E143 is the Proton acceptor of the active site. 209-211 lines the substrate pocket; that stretch reads KTG.

This sequence belongs to the class-A beta-lactamase family.

It carries out the reaction a beta-lactam + H2O = a substituted beta-amino acid. In terms of biological role, SHV enzymes hydrolyze broad spectrum cephalosporins notably cefotaxime and ceftazidime. SHV-4 causes particularly high levels of resistance to aztreonam and ceftazidime. This chain is Beta-lactamase SHV-4 (bla), found in Klebsiella pneumoniae.